Reading from the N-terminus, the 660-residue chain is MSYEPRGDHDKGYGGGGGHDGLPPRNRGRRPVTDYGASVVHYMRHRQPRYRGSYAGEVERPSPSYIVDMLPPYARVTNPADSVPSRHLHSSLNKIKHPINVVRWTPEGRRLLTASSSGEFTLWNGTGFNFETIMQAHDSAIRALVYSHSDDWLVSADHDGIIKYWQPNFNNVESIRGHTDPIRDLAFSPNDTKFVTASDDQTLKVFDFAGGSTDMTLTGHGWDAKSCDWHPSRGLIVSGSKDHLVKLWDPRTGRCLTTLHGHKNTITKTLFERVQGNCLATSARDQTARVFDLRMMRDIALLRGHEKDISTLTWHPVHSNLLSTGGSDGSLFHYLLDEPNTAPDGSVMPIPAVYDTADPSSAPAQPIYPAHKIPYAHDFAIWSLDWHPLGHILASGSNDRITRFWSRARPGEAPESFNDRYHIGEAAAEAQGTWDRRGGRHMRQVEEEQELEDEMDGLVDQKMPIKGQPGVGGGGMMPGLSFPSIPGLPLQQVPSSGPGGSGFIPPPPIIPGVGGATGVPPPLPFPIPGMPGLPAGVVPPPLPGLDLKNPPDFSALAEMMKKAGYQPPPPPGSAGAPMPPPGILPPGLIPPPGAAGFPMPPPGFAPPPLIPGAGGPPGGATHPDGGNDQYDSSGRRRAPLPSQEESLRMEQSKGNYTRVR.

The span at 1-12 (MSYEPRGDHDKG) shows a compositional bias: basic and acidic residues. Positions 1–32 (MSYEPRGDHDKGYGGGGGHDGLPPRNRGRRPV) are disordered. WD repeat units lie at residues 94 to 133 (KIKH…FETI), 136 to 176 (AHDS…ESIR), 177 to 216 (GHTD…TDMT), 219 to 258 (GHGW…CLTT), 261 to 301 (GHKN…DIAL), 304 to 344 (GHEK…TAPD), and 376 to 415 (AHDF…EAPE). Positions 562–660 (KAGYQPPPPP…QSKGNYTRVR (99 aa)) are disordered. Pro residues predominate over residues 566-610 (QPPPPPGSAGAPMPPPGILPPGLIPPPGAAGFPMPPPGFAPPPLI).

The protein resides in the nucleus. In terms of biological role, required for 3'-end cleavage and polyadenylation of pre-mRNAs. Also involved in chromosome segregation where it has a role in chromosome attachment to the mitotic spindle. The protein is Polyadenylation factor subunit 2 (paa-1) of Neurospora crassa (strain ATCC 24698 / 74-OR23-1A / CBS 708.71 / DSM 1257 / FGSC 987).